The primary structure comprises 237 residues: Phosphoribosylaminoimidazole-succinocarboxamide synthase (237 aa).

The protein belongs to the SAICAR synthetase family.

The enzyme catalyses 5-amino-1-(5-phospho-D-ribosyl)imidazole-4-carboxylate + L-aspartate + ATP = (2S)-2-[5-amino-1-(5-phospho-beta-D-ribosyl)imidazole-4-carboxamido]succinate + ADP + phosphate + 2 H(+). The protein operates within purine metabolism; IMP biosynthesis via de novo pathway; 5-amino-1-(5-phospho-D-ribosyl)imidazole-4-carboxamide from 5-amino-1-(5-phospho-D-ribosyl)imidazole-4-carboxylate: step 1/2. In Yersinia pseudotuberculosis serotype O:1b (strain IP 31758), this protein is Phosphoribosylaminoimidazole-succinocarboxamide synthase.